The following is a 105-amino-acid chain: Thioredoxin (105 aa).

Residues 1–105 (MFELDKDTFE…NVEAMVKKYI (105 aa)) form the Thioredoxin domain. Cysteine 29 and cysteine 32 form a disulfide bridge.

It belongs to the thioredoxin family.

Participates in various redox reactions through the reversible oxidation of its active center dithiol to a disulfide and catalyzes dithiol-disulfide exchange reactions. The chain is Thioredoxin (trxA) from Acetoanaerobium sticklandii (strain ATCC 12662 / DSM 519 / JCM 1433 / CCUG 9281 / NCIMB 10654 / HF) (Clostridium sticklandii).